The sequence spans 199 residues: Holliday junction branch migration complex subunit RuvA (199 aa).

A domain I region spans residues 1-64 (MIGRISGLLL…EDGHFLYGFA (64 aa)). Positions 65-143 (TDEERTAFRQ…KALPQVAGAR (79 aa)) are domain II. Positions 144-154 (LAAVAGGAPDA) are flexible linker. A domain III region spans residues 154–199 (AKSDILNALLALGYNEKEALGAMKGLAEDTGVSDGIRQALKLLSKA).

Belongs to the RuvA family. In terms of assembly, homotetramer. Forms an RuvA(8)-RuvB(12)-Holliday junction (HJ) complex. HJ DNA is sandwiched between 2 RuvA tetramers; dsDNA enters through RuvA and exits via RuvB. An RuvB hexamer assembles on each DNA strand where it exits the tetramer. Each RuvB hexamer is contacted by two RuvA subunits (via domain III) on 2 adjacent RuvB subunits; this complex drives branch migration. In the full resolvosome a probable DNA-RuvA(4)-RuvB(12)-RuvC(2) complex forms which resolves the HJ.

It is found in the cytoplasm. The RuvA-RuvB-RuvC complex processes Holliday junction (HJ) DNA during genetic recombination and DNA repair, while the RuvA-RuvB complex plays an important role in the rescue of blocked DNA replication forks via replication fork reversal (RFR). RuvA specifically binds to HJ cruciform DNA, conferring on it an open structure. The RuvB hexamer acts as an ATP-dependent pump, pulling dsDNA into and through the RuvAB complex. HJ branch migration allows RuvC to scan DNA until it finds its consensus sequence, where it cleaves and resolves the cruciform DNA. This chain is Holliday junction branch migration complex subunit RuvA, found in Azoarcus sp. (strain BH72).